The chain runs to 700 residues: Probable transcription factor FUP6 (700 aa).

Disordered stretches follow at residues 343–364 (SEAG…NRHS) and 577–624 (FDSV…PLNQ). Over residues 577 to 595 (FDSVHSGRDSVSSAMNYQS) the composition is skewed to polar residues. Positions 596–607 (DSRKRARLDTES) are enriched in basic and acidic residues. The segment covering 608-623 (NPRSSQRNDGSGQPLN) has biased composition (polar residues).

The protein localises to the nucleus. In terms of biological role, probable transcrition factor; part of the gene cluster that mediates the biosynthesis of the mycotoxin fusaproliferin (FUP) that belongs to the class of bicyclic sesterterpenoids. This chain is Probable transcription factor FUP6, found in Fusarium proliferatum (strain ET1) (Orchid endophyte fungus).